A 468-amino-acid chain; its full sequence is Homocitrate synthase (468 aa).

Residues 11–266 form the Pyruvate carboxyltransferase domain; that stretch reads VGILDSTLRE…IEVVDLKKLS (256 aa). A 2-oxoglutarate-binding site is contributed by Arg19. Glu20 is a binding site for Mg(2+). Residues His83, Arg143, and Thr177 each contribute to the 2-oxoglutarate site. Positions 205 and 207 each coordinate Mg(2+). His299 (proton acceptor) is an active-site residue.

It belongs to the alpha-IPM synthase/homocitrate synthase family. Homocitrate synthase LYS20/LYS21 subfamily. It depends on Mg(2+) as a cofactor. Mn(2+) serves as cofactor.

It carries out the reaction acetyl-CoA + 2-oxoglutarate + H2O = (2R)-homocitrate + CoA + H(+). It participates in amino-acid biosynthesis; L-lysine biosynthesis via AAA pathway; L-alpha-aminoadipate from 2-oxoglutarate: step 1/5. Its activity is regulated as follows. Inhibited by lysine. Functionally, catalyzes the aldol-type condensation of 2-oxoglutarate with acetyl-CoA to yield homocitrate. Carries out the first step of the alpha-aminoadipate (AAA) lysine biosynthesis pathway. Does not display 2-isopropylmalate synthase and citramalate synthase activities since it cannot use 2-oxoisovalerate or pyruvate as substrate. The chain is Homocitrate synthase from Sulfolobus acidocaldarius (strain ATCC 33909 / DSM 639 / JCM 8929 / NBRC 15157 / NCIMB 11770).